The primary structure comprises 511 residues: MAAMDLRVAAPASVAAAARCGTSLARPWPARAVGGGGGGGGRGRRLSVRTSVATTEAAAAAVGASEDAALEARDSKTVVAVILGGGAGTRLFPLTKRRAKPAVPIGGAYRLIDVPMSNCINSGINKVYILTQFNSASLNRHLSRAYNFSNGVAFGDGFVEVLAATQTPGSEGKRWFQGTADAVRQFDWLFDDAKAKDIDDVLILSGDHLYRMDYMDFVQSHRQRGADISICCLPIDDSRASDFGLMKIDDTGRVIAFSEKPKGDDLKAMQVDTTVLGLPQDEAKEKPYIASMGVYIFKKEILLNLLRWRFPTANDFGSEIIPASAKEINVKAYLFNDYWEDIGTIKSFFEANLSLAEQPPRFSFYDANKPMYTSRRNLPPSMINNSKITDSIISHGCFLDSCRIEHSVVGIRSRIGSNVHLKDTVMLGADFYETDLERGELLAEGKVPIGIGENTKIQNCIIDKNARIGKNVTISNSEGVQEADRTSEGFYIRSGITIVLKNSIIADGLVI.

Residues 1–58 constitute a chloroplast transit peptide; sequence MAAMDLRVAAPASVAAAARCGTSLARPWPARAVGGGGGGGGRGRRLSVRTSVATTEAA.

Belongs to the bacterial/plant glucose-1-phosphate adenylyltransferase family. In terms of assembly, heterotetramer composed of two small and two large subunits. Expressed in leaves and stems.

It localises to the plastid. It is found in the chloroplast. Its subcellular location is the amyloplast. It carries out the reaction alpha-D-glucose 1-phosphate + ATP + H(+) = ADP-alpha-D-glucose + diphosphate. It participates in glycan biosynthesis; starch biosynthesis. Activated by 3'phosphoglycerate, inhibited by orthophosphate. Allosteric regulation. In terms of biological role, involved in synthesis of starch. Catalyzes the synthesis of ADP-glucose, a molecule that serves as an activated glycosyl donor for alpha-1,4-glucan synthesis. Essential for starch synthesis in leaf chloroplasts and endosperm amyloplasts. The chain is Glucose-1-phosphate adenylyltransferase large subunit 1, chloroplastic/amyloplastic from Oryza sativa subsp. japonica (Rice).